The primary structure comprises 689 residues: Acetyl-coenzyme A synthetase 2-like, mitochondrial (689 aa).

A mitochondrion-targeting transit peptide spans 1-37 (MAARTLGRGVGRLLGSLRGLSGQPARPPCGVSAPRRA). Positions 17–46 (LRGLSGQPARPPCGVSAPRRAASGPSGSAP) are disordered. The span at 32-46 (SAPRRAASGPSGSAP) shows a compositional bias: low complexity. Residues 224-227 (RGGR) and Thr341 each bind CoA. Residue Lys396 is modified to N6-acetyllysine. ATP contacts are provided by residues 417–419 (GEP), 441–446 (DTWWQT), Asp533, and Arg548. Residue Ser556 participates in CoA binding. Position 559 (Arg559) interacts with ATP. Lys642 is modified (N6-acetyllysine).

This sequence belongs to the ATP-dependent AMP-binding enzyme family. Interacts with SIRT3. Reversibly acetylated on Lys-642. The acetyl-CoA synthase activity is inhibited by acetylation and activated by deacetylation mediated by the deacetylase SIRT3.

Its subcellular location is the mitochondrion matrix. It carries out the reaction acetate + ATP + CoA = acetyl-CoA + AMP + diphosphate. The enzyme catalyses propanoate + ATP + CoA = propanoyl-CoA + AMP + diphosphate. Inhibited by acetylation at Lys-642 and activated by deacetylation mediated by the deacetylase SIRT3. Its function is as follows. Catalyzes the synthesis of acetyl-CoA from short-chain fatty acids. Acetate is the preferred substrate. Can also utilize propionate with a much lower affinity. Provides acetyl-CoA that is utilized mainly for oxidation under ketogenic conditions. Involved in thermogenesis under ketogenic conditions, using acetate as a vital fuel when carbohydrate availability is insufficient. The polypeptide is Acetyl-coenzyme A synthetase 2-like, mitochondrial (ACSS1) (Homo sapiens (Human)).